Reading from the N-terminus, the 750-residue chain is Photosystem I P700 chlorophyll a apoprotein A1 (750 aa).

The next 8 membrane-spanning stretches (helical) occupy residues 70-93 (VFSA…FHGA), 156-179 (LYCT…FHYH), 195-219 (LNHH…HVSL), 291-309 (IAHH…GHMY), 346-369 (WHAQ…HHMY), 385-411 (LSLF…IFMV), 433-455 (AIIS…LYIH), and 531-549 (FLVH…LILL). 2 residues coordinate [4Fe-4S] cluster: Cys-573 and Cys-582. The next 2 helical transmembrane spans lie at 589 to 610 (HVFL…HFSW) and 664 to 686 (LSAY…MFLF). His-675 provides a ligand contact to chlorophyll a'. Met-683 and Tyr-691 together coordinate chlorophyll a. Phylloquinone is bound at residue Trp-692. The helical transmembrane segment at 724–744 (AVGVTHYLLGGIATTWAFFLA) threads the bilayer.

The protein belongs to the PsaA/PsaB family. The PsaA/B heterodimer binds the P700 chlorophyll special pair and subsequent electron acceptors. PSI consists of a core antenna complex that captures photons, and an electron transfer chain that converts photonic excitation into a charge separation. The eukaryotic PSI reaction center is composed of at least 11 subunits. P700 is a chlorophyll a/chlorophyll a' dimer, A0 is one or more chlorophyll a, A1 is one or both phylloquinones and FX is a shared 4Fe-4S iron-sulfur center. is required as a cofactor.

The protein localises to the plastid. It is found in the chloroplast thylakoid membrane. It carries out the reaction reduced [plastocyanin] + hnu + oxidized [2Fe-2S]-[ferredoxin] = oxidized [plastocyanin] + reduced [2Fe-2S]-[ferredoxin]. Functionally, psaA and PsaB bind P700, the primary electron donor of photosystem I (PSI), as well as the electron acceptors A0, A1 and FX. PSI is a plastocyanin-ferredoxin oxidoreductase, converting photonic excitation into a charge separation, which transfers an electron from the donor P700 chlorophyll pair to the spectroscopically characterized acceptors A0, A1, FX, FA and FB in turn. Oxidized P700 is reduced on the lumenal side of the thylakoid membrane by plastocyanin. The protein is Photosystem I P700 chlorophyll a apoprotein A1 of Aethionema cordifolium (Lebanon stonecress).